Here is a 1032-residue protein sequence, read N- to C-terminus: Phosphoenolpyruvate carboxylase 4 (1032 aa).

Residue His154 is part of the active site. Residues 377 to 407 (PNLQKQNEQDFSESDWEKIDNGSRSGLTSRG) are disordered. Residues 398–407 (GSRSGLTSRG) are compositionally biased toward polar residues. The active site involves Lys699.

This sequence belongs to the PEPCase type 1 family. Homotetramer. Mg(2+) serves as cofactor. As to expression, expressed at low levels in flowers and siliques, and detectable in roots.

It localises to the cytoplasm. It catalyses the reaction oxaloacetate + phosphate = phosphoenolpyruvate + hydrogencarbonate. Through the carboxylation of phosphoenolpyruvate (PEP) it forms oxaloacetate, a four-carbon dicarboxylic acid source for the tricarboxylic acid cycle. The sequence is that of Phosphoenolpyruvate carboxylase 4 (PPC4) from Arabidopsis thaliana (Mouse-ear cress).